The chain runs to 274 residues: Large ribosomal subunit protein uL2cz/uL2cy (274 aa).

Residues 224-274 (NPVDHPHGGGEGRAPIGRKKPTTPWGYPALGRRSRKRNKYSDNLILRRRSK) are disordered.

It belongs to the universal ribosomal protein uL2 family. In terms of assembly, part of the 50S ribosomal subunit.

Its subcellular location is the plastid. It localises to the chloroplast. The protein is Large ribosomal subunit protein uL2cz/uL2cy (rpl2-A) of Panax ginseng (Korean ginseng).